The primary structure comprises 250 residues: Probable transcriptional regulatory protein SYNAS_07390 (250 aa).

It belongs to the TACO1 family.

The protein resides in the cytoplasm. The protein is Probable transcriptional regulatory protein SYNAS_07390 of Syntrophus aciditrophicus (strain SB).